Here is a 120-residue protein sequence, read N- to C-terminus: UPF0344 protein LMOf2365_2298 (120 aa).

4 consecutive transmembrane segments (helical) span residues 3–23, 33–53, 62–82, and 92–112; these read GYIH…ALLI, MLQM…IMMV, ILAI…EMLL, and GMFL…GFYL.

This sequence belongs to the UPF0344 family.

Its subcellular location is the cell membrane. The chain is UPF0344 protein LMOf2365_2298 from Listeria monocytogenes serotype 4b (strain F2365).